The sequence spans 557 residues: MGNHKAALTKQVFTFASELYAYGVREVVISPGSRSTPLALAFEAHPNIKTWIHPDERSAAFFAVGLIKGSERPVAILCTSGTAAANYTPAIAESQISRIPLIVLTSDRPHELRSVGAPQAINQVNMFNNYVSYEFDMPIADDSKETIDAIYYQMQIASQYLYGPHKGPIHFNLPFRDPLTPDLNATELLTSEMKILPHYQKSIDASALRHILNKKKGLIIVGDMQHQEVDQILTYSTIYDLPILADPLSHLRKFDHPNVICTYDLLFRSGLDLKVDFVIRVGKPVISKKLNQWLKKTDAFQILVQNNDKIDVFPIAPDISYEISANDFFRSLMEDTTVNRVSWLEKWQRIEKKGRKEIKCYLEQATDESAFVGELIKKTSEKDALFISNSMPIRDVDNLLLNKNIDVYANRGANGIDGIVSTALGMAVHKRVTLLIGDLSFYHDMNGLLMSKLNNIQMNIVLLNNDGGGIFSYLPQKESATDYFERLFGTPTGLDFEYTAKLYQFDFKRFNNVSEFKNATLLSETSTIYELITNREDNFKQHQILYQKLSEMIHDTL.

Belongs to the TPP enzyme family. MenD subfamily. Homodimer. Mg(2+) serves as cofactor. Requires Mn(2+) as cofactor. It depends on thiamine diphosphate as a cofactor.

It catalyses the reaction isochorismate + 2-oxoglutarate + H(+) = 5-enolpyruvoyl-6-hydroxy-2-succinyl-cyclohex-3-ene-1-carboxylate + CO2. The protein operates within quinol/quinone metabolism; 1,4-dihydroxy-2-naphthoate biosynthesis; 1,4-dihydroxy-2-naphthoate from chorismate: step 2/7. It functions in the pathway quinol/quinone metabolism; menaquinone biosynthesis. Catalyzes the thiamine diphosphate-dependent decarboxylation of 2-oxoglutarate and the subsequent addition of the resulting succinic semialdehyde-thiamine pyrophosphate anion to isochorismate to yield 2-succinyl-5-enolpyruvyl-6-hydroxy-3-cyclohexene-1-carboxylate (SEPHCHC). This Staphylococcus aureus (strain MRSA252) protein is 2-succinyl-5-enolpyruvyl-6-hydroxy-3-cyclohexene-1-carboxylate synthase.